The following is a 378-amino-acid chain: Putative protein YbfL (378 aa).

Belongs to the transposase 11 family.

This Escherichia coli (strain K12) protein is Putative protein YbfL (ybfL).